The sequence spans 245 residues: Tetraspanin-6 (245 aa).

Topologically, residues 1-19 (MASPSRRLQTKPVITCFKS) are cytoplasmic. Residues 20–40 (VLLIYTFIFWITGVILLAVGI) form a helical membrane-spanning segment. The Extracellular segment spans residues 41 to 59 (WGKVSLENYFSLLNEKATN). Residues 60 to 80 (VPFVLIATGTVIILLGTFGCF) traverse the membrane as a helical segment. Residues 81-93 (ATCRASAWMLKLY) lie on the Cytoplasmic side of the membrane. Residues 94 to 114 (AMFLTLIFLVELVAAIVGFVF) form a helical membrane-spanning segment. Residues 115–208 (RHEIKNSFKN…IKVMTIIESE (94 aa)) lie on the Extracellular side of the membrane. Asn-134 is a glycosylation site (N-linked (GlcNAc...) asparagine). The chain crosses the membrane as a helical span at residues 209–229 (MGVVAGISFGVACFQLIGIFL). At 230–245 (AYCLSRAITNNQYEIV) the chain is on the cytoplasmic side.

This sequence belongs to the tetraspanin (TM4SF) family.

It localises to the membrane. This Pongo abelii (Sumatran orangutan) protein is Tetraspanin-6 (TSPAN6).